The sequence spans 205 residues: Holliday junction branch migration complex subunit RuvA (205 aa).

The tract at residues 1–64 (MIGRLRGIIL…EDAQLLYGFN (64 aa)) is domain I. The segment at 65 to 143 (DKQERALFRE…GLNGDLFNNT (79 aa)) is domain II. A flexible linker region spans residues 144 to 156 (GDIQLPASNSSQI). The interval 157–205 (SDADIEAEAASALVALGYKPQEASRLVSKIAKPGADCETLIRDALRAAL) is domain III.

Belongs to the RuvA family. In terms of assembly, homotetramer. Forms an RuvA(8)-RuvB(12)-Holliday junction (HJ) complex. HJ DNA is sandwiched between 2 RuvA tetramers; dsDNA enters through RuvA and exits via RuvB. An RuvB hexamer assembles on each DNA strand where it exits the tetramer. Each RuvB hexamer is contacted by two RuvA subunits (via domain III) on 2 adjacent RuvB subunits; this complex drives branch migration. In the full resolvosome a probable DNA-RuvA(4)-RuvB(12)-RuvC(2) complex forms which resolves the HJ.

The protein resides in the cytoplasm. The RuvA-RuvB-RuvC complex processes Holliday junction (HJ) DNA during genetic recombination and DNA repair, while the RuvA-RuvB complex plays an important role in the rescue of blocked DNA replication forks via replication fork reversal (RFR). RuvA specifically binds to HJ cruciform DNA, conferring on it an open structure. The RuvB hexamer acts as an ATP-dependent pump, pulling dsDNA into and through the RuvAB complex. HJ branch migration allows RuvC to scan DNA until it finds its consensus sequence, where it cleaves and resolves the cruciform DNA. The sequence is that of Holliday junction branch migration complex subunit RuvA from Yersinia enterocolitica serotype O:8 / biotype 1B (strain NCTC 13174 / 8081).